The chain runs to 367 residues: Phosphoribosylaminoimidazole-succinocarboxamide synthase (367 aa).

Belongs to the SAICAR synthetase family.

The enzyme catalyses 5-amino-1-(5-phospho-D-ribosyl)imidazole-4-carboxylate + L-aspartate + ATP = (2S)-2-[5-amino-1-(5-phospho-beta-D-ribosyl)imidazole-4-carboxamido]succinate + ADP + phosphate + 2 H(+). The protein operates within purine metabolism; IMP biosynthesis via de novo pathway; 5-amino-1-(5-phospho-D-ribosyl)imidazole-4-carboxamide from 5-amino-1-(5-phospho-D-ribosyl)imidazole-4-carboxylate: step 1/2. In Shewanella baltica (strain OS185), this protein is Phosphoribosylaminoimidazole-succinocarboxamide synthase.